The following is an 82-amino-acid chain: Immediate early response 3-interacting protein 1 (82 aa).

The next 2 helical transmembrane spans lie at Ala2–Leu22 and Val62–Gly82.

It belongs to the YOS1 family.

It is found in the endoplasmic reticulum membrane. In terms of biological role, regulator of endoplasmic reticulum secretion that acts as a key determinant of brain size. Required for secretion of extracellular matrix proteins. Required for correct brain development by depositing sufficient extracellular matrix proteins for tissue integrity and the proliferation of neural progenitors. Acts as a regulator of the unfolded protein response (UPR). This chain is Immediate early response 3-interacting protein 1, found in Danio rerio (Zebrafish).